Reading from the N-terminus, the 256-residue chain is 2-C-methyl-D-erythritol 4-phosphate cytidylyltransferase (256 aa).

Belongs to the IspD/TarI cytidylyltransferase family. IspD subfamily.

It carries out the reaction 2-C-methyl-D-erythritol 4-phosphate + CTP + H(+) = 4-CDP-2-C-methyl-D-erythritol + diphosphate. Its pathway is isoprenoid biosynthesis; isopentenyl diphosphate biosynthesis via DXP pathway; isopentenyl diphosphate from 1-deoxy-D-xylulose 5-phosphate: step 2/6. Its function is as follows. Catalyzes the formation of 4-diphosphocytidyl-2-C-methyl-D-erythritol from CTP and 2-C-methyl-D-erythritol 4-phosphate (MEP). The protein is 2-C-methyl-D-erythritol 4-phosphate cytidylyltransferase of Corynebacterium glutamicum (strain ATCC 13032 / DSM 20300 / JCM 1318 / BCRC 11384 / CCUG 27702 / LMG 3730 / NBRC 12168 / NCIMB 10025 / NRRL B-2784 / 534).